Reading from the N-terminus, the 378-residue chain is 23S rRNA (uracil(747)-C(5))-methyltransferase RlmC (378 aa).

The [4Fe-4S] cluster site is built by Cys3, Cys11, Cys14, and Cys87. The S-adenosyl-L-methionine site is built by Gln212, Phe241, Glu262, and Asn309. Catalysis depends on Cys336, which acts as the Nucleophile.

It belongs to the class I-like SAM-binding methyltransferase superfamily. RNA M5U methyltransferase family. RlmC subfamily.

It catalyses the reaction uridine(747) in 23S rRNA + S-adenosyl-L-methionine = 5-methyluridine(747) in 23S rRNA + S-adenosyl-L-homocysteine + H(+). Its function is as follows. Catalyzes the formation of 5-methyl-uridine at position 747 (m5U747) in 23S rRNA. The chain is 23S rRNA (uracil(747)-C(5))-methyltransferase RlmC from Shewanella pealeana (strain ATCC 700345 / ANG-SQ1).